A 474-amino-acid chain; its full sequence is Nucleobindin-1 (474 aa).

The first 24 residues, 1–24 (MPPSGPRAALFLLPSLLLLRAVLA), serve as a signal peptide directing secretion. Position 83 is a phosphoserine (Ser-83). Thr-145 carries the post-translational modification Phosphothreonine. Positions 147–215 (EARDLELLIQ…QQRRHREHPK (69 aa)) form a coiled coil. The span at 190–207 (SLGEEQRKEAERKLEEQQ) shows a compositional bias: basic and acidic residues. The segment at 190–218 (SLGEEQRKEAERKLEEQQRRHREHPKVNV) is disordered. Residues 225–318 (LKEVWEELDG…VTLEEFLAST (94 aa)) form a binds to GNAI2 and GNAI3 region. EF-hand domains lie at 237-272 (PNRFNPKTFFILHDINSDGVLDEQELEALFTKELEK) and 289-324 (ERLRMREHVMKNVDTNQDRLVTLEEFLASTQRKEFG). Residues Asp-250, Asn-252, Asp-254, Glu-261, Asp-302, Asn-304, Asp-306, and Glu-313 each contribute to the Ca(2+) site. The GBA motif lies at 300–330 (NVDTNQDRLVTLEEFLASTQRKEFGDTGEGW). A coiled-coil region spans residues 355–422 (AYTEEELRRF…RKQQQQSHNN (68 aa)). The tract at residues 382–474 (LSQETEALGR…EPPQLDSQHL (93 aa)) is disordered. Ser-383 carries the post-translational modification Phosphoserine. A compositionally biased stretch (basic and acidic residues) spans 448 to 460 (DQKDVDASEKKVP). At Ser-471 the chain carries Phosphoserine.

It belongs to the nucleobindin family. In terms of assembly, interacts (via GBA motif) with guanine nucleotide-binding protein G(i) alpha subunits GNAI1, GNAI2 and GNAI3 with higher affinity for GNAI1 and GNAI3 than for GNAI2. Preferentially interacts with inactive rather than active GNAI3. Interaction with GNAI3 is inhibited when NUCB1 binds calcium, probably due to a conformational change which renders the GBA motif inaccessible. Expressed in bone where it is detected in the soft tissue in the center of the osteon and in the osteocyte lacuna (at protein level).

The protein resides in the golgi apparatus. It localises to the cis-Golgi network membrane. The protein localises to the cytoplasm. Its subcellular location is the secreted. In terms of biological role, major calcium-binding protein of the Golgi which may have a role in calcium homeostasis. Acts as a non-receptor guanine nucleotide exchange factor which binds to and activates alpha subunits of guanine nucleotide-binding proteins (G proteins). The protein is Nucleobindin-1 (NUCB1) of Bos taurus (Bovine).